We begin with the raw amino-acid sequence, 527 residues long: Bifunctional purine biosynthesis protein PurH (527 aa).

Residues 1–149 (MASDFLPVRR…KNFARVAVAT (149 aa)) enclose the MGS-like domain.

It belongs to the PurH family.

It carries out the reaction (6R)-10-formyltetrahydrofolate + 5-amino-1-(5-phospho-beta-D-ribosyl)imidazole-4-carboxamide = 5-formamido-1-(5-phospho-D-ribosyl)imidazole-4-carboxamide + (6S)-5,6,7,8-tetrahydrofolate. The catalysed reaction is IMP + H2O = 5-formamido-1-(5-phospho-D-ribosyl)imidazole-4-carboxamide. It participates in purine metabolism; IMP biosynthesis via de novo pathway; 5-formamido-1-(5-phospho-D-ribosyl)imidazole-4-carboxamide from 5-amino-1-(5-phospho-D-ribosyl)imidazole-4-carboxamide (10-formyl THF route): step 1/1. Its pathway is purine metabolism; IMP biosynthesis via de novo pathway; IMP from 5-formamido-1-(5-phospho-D-ribosyl)imidazole-4-carboxamide: step 1/1. This Xanthomonas oryzae pv. oryzae (strain PXO99A) protein is Bifunctional purine biosynthesis protein PurH.